Consider the following 178-residue polypeptide: Inner membrane-spanning protein YciB (178 aa).

The next 5 membrane-spanning stretches (helical) occupy residues 22-42 (IFYA…MTYF), 50-70 (ASLI…AFHS), 72-92 (LFIK…LLGS), 121-141 (MAWA…AFWL), and 149-169 (FKVF…VVYI).

It belongs to the YciB family.

The protein resides in the cell inner membrane. In terms of biological role, plays a role in cell envelope biogenesis, maintenance of cell envelope integrity and membrane homeostasis. In Photorhabdus laumondii subsp. laumondii (strain DSM 15139 / CIP 105565 / TT01) (Photorhabdus luminescens subsp. laumondii), this protein is Inner membrane-spanning protein YciB.